The sequence spans 239 residues: 1-(5-phosphoribosyl)-5-[(5-phosphoribosylamino)methylideneamino] imidazole-4-carboxamide isomerase (239 aa).

The active-site Proton acceptor is Asp-8. The active-site Proton donor is Asp-129.

This sequence belongs to the HisA/HisF family.

It localises to the cytoplasm. The enzyme catalyses 1-(5-phospho-beta-D-ribosyl)-5-[(5-phospho-beta-D-ribosylamino)methylideneamino]imidazole-4-carboxamide = 5-[(5-phospho-1-deoxy-D-ribulos-1-ylimino)methylamino]-1-(5-phospho-beta-D-ribosyl)imidazole-4-carboxamide. The protein operates within amino-acid biosynthesis; L-histidine biosynthesis; L-histidine from 5-phospho-alpha-D-ribose 1-diphosphate: step 4/9. This Cereibacter sphaeroides (strain ATCC 17029 / ATH 2.4.9) (Rhodobacter sphaeroides) protein is 1-(5-phosphoribosyl)-5-[(5-phosphoribosylamino)methylideneamino] imidazole-4-carboxamide isomerase.